The sequence spans 173 residues: Photosystem I assembly protein Ycf3 (173 aa).

3 TPR repeats span residues 35-68 (AYIYYREGFAAQNNGDYSEALENYEESLKLEENP), 72-105 (GETLKNMAIIYMSNGDEDRALETYVKALDQNPKQ), and 120-153 (GRSAQQRGLQDESDIWFDKAADVWTKAVRLYPGG).

Belongs to the Ycf3 family.

It localises to the cellular thylakoid membrane. Functionally, essential for the assembly of the photosystem I (PSI) complex. May act as a chaperone-like factor to guide the assembly of the PSI subunits. The sequence is that of Photosystem I assembly protein Ycf3 from Prochlorococcus marinus (strain MIT 9211).